Consider the following 507-residue polypeptide: Phosphoprotein (507 aa).

The interval 1–48 is interaction with N0; the sequence is MAEEQARHVKNGLECIRALKAEPIGSLAIEEAMAAWSEISDNPGQERA. 5 disordered regions span residues 40–100, 134–163, 201–232, 250–273, and 285–309; these read SDNP…PRNL, GLDG…TEGY, NNFP…KKGT, GATQ…GNVP, and WTPE…HYDD. The residue at position 86 (Ser-86) is a Phosphoserine. The segment covering 134 to 145 has biased composition (low complexity); the sequence is GLDGDSTLSGGD. The segment covering 146 to 160 has biased composition (acidic residues); sequence NESENSDVDIGEPDT. Phosphoserine is present on Ser-151. The segment covering 260-270 has biased composition (low complexity); that stretch reads SEPSGPGAPAG. Over residues 286–301 the composition is skewed to polar residues; it reads TPESGTTISPRSQNNE. Residues 304–376 form a multimerization region; it reads GDHYDDELFS…LSSIMIAIPG (73 aa). Ca(2+) is bound at residue Asp-314. Interaction with the L polymerase stretches follow at residues 361-377 and 396-410; these read STLE…IPGL and PIIG…AEVL. The interval 457–507 is x domain (XD); the sequence is GPASRSVIRSIIKSSRLEEDRKRYLMTLLDDIKGANDLAKFHQMLMKIIMK. Residues 459–507 are interaction with the nucleocapsid (N-RNA); sequence ASRSVIRSIIKSSRLEEDRKRYLMTLLDDIKGANDLAKFHQMLMKIIMK.

This sequence belongs to the morbillivirus P protein family. As to quaternary structure, homotetramer. Interacts (via multimerization domain and XD domain) with polymerase L; this interaction forms the polymerase L-P complex. Interacts (via N-terminus) with N0 (via Ncore); this interaction allows P to chaperon N0 to avoid N polymerization and non-specific RNA binding before encapsidation. Interacts (via C-terminus) with N-RNA template (via Ntail); this interaction maintains the P/L complex anchored to the nucleocapsid template during the sequential transcription. Interacts (via C-terminus) with protein C this interaction allows C to associate with the ribonucleocapsid. Phosphorylation on serines by host CK2 is necessary for the formation of viral factories.

In terms of biological role, essential cofactor of the RNA polymerase L that plays a central role in the transcription and replication by forming the polymerase complex with RNA polymerase L and recruiting L to the genomic N-RNA template for RNA synthesis. Also plays a central role in the encapsidation of nascent RNA chains by forming the encapsidation complex with the nucleocapsid protein N (N-P complex). Acts as a chaperone for newly synthesized free N protein, so-called N0, allowing encapsidation of nascent RNA chains during replication. The nucleoprotein protein N prevents excessive phosphorylation of P, which leads to down-regulation of viral transcription/ replication. Participates, together with N, in the formation of viral factories (viroplasms), which are large inclusions in the host cytoplasm where replication takes place. This chain is Phosphoprotein (P/V), found in Measles virus (strain Edmonston B) (MeV).